Here is a 436-residue protein sequence, read N- to C-terminus: Protein arginine methyltransferase NDUFAF7, mitochondrial (436 aa).

A mitochondrion-targeting transit peptide spans 1-41; that stretch reads MNALVRRCVARTGIPSIWRRKCFSSGNEPAESNHVTPMLRH. The interval 413–436 is disordered; that stretch reads QGGKACQSEAPSTSVPGFDELVWH.

It belongs to the NDUFAF7 family. Interacts with NDUFS2.

It localises to the mitochondrion. The enzyme catalyses L-arginyl-[protein] + 2 S-adenosyl-L-methionine = N(omega),N(omega)'-dimethyl-L-arginyl-[protein] + 2 S-adenosyl-L-homocysteine + 2 H(+). In terms of biological role, arginine methyltransferase involved in the assembly or stability of mitochondrial NADH:ubiquinone oxidoreductase complex (complex I). Acts by mediating symmetric dimethylation of 'Arg-118' of NDUFS2 after it assembles into the complex I, stabilizing the early intermediate complex. The polypeptide is Protein arginine methyltransferase NDUFAF7, mitochondrial (Rattus norvegicus (Rat)).